Reading from the N-terminus, the 167-residue chain is Phospholipase A2 (167 aa).

The Ca(2+) site is built by Trp-38, Gly-40, and Gly-42. Disulfide bonds link Cys-39-Cys-61, Cys-60-Cys-99, Cys-67-Cys-92, Cys-90-Cys-127, and Cys-132-Cys-144. A glycan (N-linked (GlcNAc...) asparagine) is linked at Asn-47. Residue His-64 is part of the active site. Residue Asp-65 participates in Ca(2+) binding. Residues 136–140 (ARSAR) constitute a propeptide that is removed on maturation.

This sequence belongs to the phospholipase A2 family. Group III subfamily. In terms of assembly, heterodimer composed of a large subunit and a small subunit; disulfide-linked. The cofactor is Ca(2+). In terms of tissue distribution, expressed by the venom gland.

Its subcellular location is the secreted. The catalysed reaction is a 1,2-diacyl-sn-glycero-3-phosphocholine + H2O = a 1-acyl-sn-glycero-3-phosphocholine + a fatty acid + H(+). Its function is as follows. Phospholipase toxin, which catalyzes the calcium-dependent hydrolysis of the 2-acyl groups in 3-sn-phosphoglycerides. Inhibits both skeletal (RYR1) and cardiac (RYR2) ryanodine receptors (calcium release channels). Probably blocks ryanodine receptors by generating a lipid product. Shows hemolytic activity, but it is not know if it is direct or indirect. The sequence is that of Phospholipase A2 from Hottentotta tamulus (Eastern Indian scorpion).